The primary structure comprises 395 residues: S-adenosylmethionine synthase (395 aa).

H15 is an ATP binding site. A Mg(2+)-binding site is contributed by D17. Residue E43 participates in K(+) binding. Residues E56 and Q99 each coordinate L-methionine. The interval 99 to 109 (QSPEIAQGVDR) is flexible loop. ATP contacts are provided by residues 164-166 (DAK), 230-231 (RF), D239, 245-246 (RK), A262, and K266. D239 contributes to the L-methionine binding site. L-methionine is bound at residue K270.

It belongs to the AdoMet synthase family. In terms of assembly, homotetramer; dimer of dimers. Requires Mg(2+) as cofactor. K(+) serves as cofactor.

The protein localises to the cytoplasm. The enzyme catalyses L-methionine + ATP + H2O = S-adenosyl-L-methionine + phosphate + diphosphate. It participates in amino-acid biosynthesis; S-adenosyl-L-methionine biosynthesis; S-adenosyl-L-methionine from L-methionine: step 1/1. Catalyzes the formation of S-adenosylmethionine (AdoMet) from methionine and ATP. The overall synthetic reaction is composed of two sequential steps, AdoMet formation and the subsequent tripolyphosphate hydrolysis which occurs prior to release of AdoMet from the enzyme. The sequence is that of S-adenosylmethionine synthase from Colwellia psychrerythraea (strain 34H / ATCC BAA-681) (Vibrio psychroerythus).